A 409-amino-acid chain; its full sequence is Multidrug resistance protein MdtG (409 aa).

Helical transmembrane passes span 16–36 (LIVA…VMPF), 58–78 (IVFS…GGLA), 92–112 (LGMG…QFLI), 115–135 (ALLG…ATQV), 146–166 (TLST…GLLA), 173–193 (PVFF…LFCI), 224–244 (LFVT…ILTL), 256–276 (VAFI…LLSA), 291–311 (ILIT…YVQT), and 379–399 (AVFL…WNSL).

Belongs to the major facilitator superfamily. DHA1 family. MdtG (TC 2.A.1.2.20) subfamily.

It is found in the cell inner membrane. Functionally, confers resistance to fosfomycin and deoxycholate. This chain is Multidrug resistance protein MdtG, found in Escherichia coli O9:H4 (strain HS).